The sequence spans 102 residues: Flagellar hook-basal body complex protein FliE 1 (102 aa).

It belongs to the FliE family.

It is found in the bacterial flagellum basal body. This chain is Flagellar hook-basal body complex protein FliE 1 (fliE1), found in Bradyrhizobium diazoefficiens (strain JCM 10833 / BCRC 13528 / IAM 13628 / NBRC 14792 / USDA 110).